A 132-amino-acid chain; its full sequence is Translation initiation factor 5A (132 aa).

Lys36 is modified (hypusine).

Belongs to the eIF-5A family.

It is found in the cytoplasm. In terms of biological role, functions by promoting the formation of the first peptide bond. This Methanosphaera stadtmanae (strain ATCC 43021 / DSM 3091 / JCM 11832 / MCB-3) protein is Translation initiation factor 5A.